The following is a 661-amino-acid chain: tRNA uridine 5-carboxymethylaminomethyl modification enzyme MnmG (661 aa).

13-18 is a binding site for FAD; sequence GGGHAG. 285 to 299 serves as a coordination point for NAD(+); the sequence is GPRYCPSVEDKINRF.

The protein belongs to the MnmG family. In terms of assembly, homodimer. Heterotetramer of two MnmE and two MnmG subunits. It depends on FAD as a cofactor.

The protein resides in the cytoplasm. Functionally, NAD-binding protein involved in the addition of a carboxymethylaminomethyl (cmnm) group at the wobble position (U34) of certain tRNAs, forming tRNA-cmnm(5)s(2)U34. The chain is tRNA uridine 5-carboxymethylaminomethyl modification enzyme MnmG from Acidovorax sp. (strain JS42).